Reading from the N-terminus, the 233-residue chain is DnaA regulatory inactivator Hda (233 aa).

The protein belongs to the DnaA family. HdA subfamily. The active form seems to be an ADP-bound monomer. Forms the RIDA complex (regulatory inactivation of DnaA) of ATP-DnaA, ADP-Hda and the DNA-loaded beta sliding clamp (dnaN).

Mediates the interaction of DNA replication initiator protein DnaA with DNA polymerase subunit beta sliding clamp (dnaN). Stimulates hydrolysis of ATP-DnaA to ADP-DnaA, rendering DnaA inactive for reinitiation, a process called regulatory inhibition of DnaA or RIDA. The protein is DnaA regulatory inactivator Hda of Photorhabdus laumondii subsp. laumondii (strain DSM 15139 / CIP 105565 / TT01) (Photorhabdus luminescens subsp. laumondii).